Reading from the N-terminus, the 320-residue chain is uncharacterized protein (320 aa).

7 helical membrane passes run 24–44, 65–85, 105–125, 132–152, 179–199, 226–246, and 253–275; these read FEFSVHGTCVVFNLFLCIFFI, FVLSLPLFFLQFYLVVFLWSL, TTSCAQVLPLAVAIYRYFIVV, SWFVVVVHSIISFIFFVIAIL, ISLTLGLNLFAVFINVAIYTF, MIPILVSIPLLVGSFDFYFGY, and TSRWYATTFLSPLLTPISSMLSL.

The protein localises to the membrane. This is an uncharacterized protein from Caenorhabditis elegans.